Reading from the N-terminus, the 586-residue chain is MSNVLDKTNLHELSIAPKISTHDEKLYECTKCGIFFHRDSVESATEINPHENLGEVRAVEDKPNNESIKVDERGTCNFHFIDEHHGKVDGINTEYDASKFKQILENYSKLTEPNQLFECLPSNLRPPSDDEGSDGKSHDPQSNGLGKTDYTVPTIIPPTVLPVLHDLAQQMVKAGHQQELFKTYRDIRRAVLAQSLEKLGVERHSKYDVERMNQDVFEAKIMNWIHYIRISVKLLFAAEKEICHQILDGVEPFRDQSFAEITTISFGMLLSFGYAIAISRRSPEKVFVILDMYEIMIELQPEFELIFGSKPCTEMKEDALNLTKLLAQTVKETIADFEVAIEMDATETVVMDGSVHALTSYVARYVKFLFDYEPTLRQLFQEFNSNDPDTKLKSVMTGIMRALRNNLDGKSRQFEDAALTQLFLMNNVYYIVRNFRREEAKNFLGDDLVQTHRRIVQQHAKQYQTISWNKILQCITVQSSKSGLIKNESIKKTLVKEKFKTFNSQFEELHQRQCQWSVSDVELRESLRLAIAEVLLPAYGSFLKRFGPMIESGKNSQKYIRFTPEDLERMLNDFFQGKNLDVSPKR.

Residues Asn65 and Asn106 are each glycosylated (N-linked (GlcNAc...) asparagine). Positions 119-149 (CLPSNLRPPSDDEGSDGKSHDPQSNGLGKTD) are disordered. Residues 258 to 278 (FAEITTISFGMLLSFGYAIAI) traverse the membrane as a helical segment. N-linked (GlcNAc...) asparagine glycosylation is found at Asn321 and Asn487.

It belongs to the EXO70 family. Subunit of the exocyst complex. In terms of tissue distribution, confined to the outer layer of the columella cells in the root tips of young seedlings.

The protein resides in the membrane. In terms of biological role, component of the exocyst complex involved in the docking of exocytic vesicles with fusion sites on the plasma membrane during regulated or polarized secretion. Involved in PIN4 exocytosis and gravitropic responses in columella cells. By monitoring PIN4 distribution in columella cells, modulates auxin repartition and subsequently regulates the root system architecture (RSA), thus being a component of the auxin-dependent root directional growth (ARD). In Arabidopsis thaliana (Mouse-ear cress), this protein is Exocyst complex component EXO70A3.